The primary structure comprises 691 residues: Calcium-binding and coiled-coil domain-containing protein 1 (691 aa).

Residues 1-30 (MEESPLSRAPSRGGVNFLNVARTYIPNTKV) are p300 KIX-binding. The N-terminal AD (CTNNB1 binding site) stretch occupies residues 1-190 (MEESPLSRAP…VQELERALAT (190 aa)). Residue Ser-4 is modified to Phosphoserine. The segment at 45–125 (SDWIGIFKVE…FQFREPRPMD (81 aa)) is interaction with GATA1. 3 coiled-coil regions span residues 145 to 205 (KATV…YKGI), 232 to 339 (ELED…AELE), and 417 to 514 (QSVE…ADEK). The interval 501-691 (RKLEARLEKV…FSTQDPFTFE (191 aa)) is C-terminal AD (CTNNB1 binding site); interaction with CCAR1. The disordered stretch occupies residues 513–604 (EKWNEDATTE…SDSEAEDEKS (92 aa)). A UBZ1-type zinc finger spans residues 653–679 (WKECPICKERFPAESDKDALEDHMDGH). The Zn(2+) site is built by Cys-656, Cys-659, His-675, and His-679.

The protein belongs to the CALCOCO family. Part of a calphoglin complex consisting of CALCOCO1, PPA1 and PGM. Interacts with the bHLH-PAS domains of GRIP1, AHR and ARNT. Interacts with CTNNB1 via both its N- and C-terminal regions. Interacts with EP300. Interacts with CCAR1 (via N-terminus) and GATA1.

The protein localises to the cytoplasm. It localises to the nucleus. Functions as a coactivator for aryl hydrocarbon and nuclear receptors (NR). Recruited to promoters through its contact with the N-terminal basic helix-loop-helix-Per-Arnt-Sim (PAS) domain of transcription factors or coactivators, such as NCOA2. During ER-activation acts synergistically in combination with other NCOA2-binding proteins, such as EP300, CREBBP and CARM1. Involved in the transcriptional activation of target genes in the Wnt/CTNNB1 pathway. Functions as a secondary coactivator in LEF1-mediated transcriptional activation via its interaction with CTNNB1. Coactivator function for nuclear receptors and LEF1/CTNNB1 involves differential utilization of two different activation regions. In association with CCAR1 enhances GATA1- and MED1-mediated transcriptional activation from the gamma-globin promoter during erythroid differentiation of K562 erythroleukemia cells. Functionally, seems to enhance inorganic pyrophosphatase thus activating phosphogluomutase (PMG). Probably functions as a component of the calphoglin complex, which is involved in linking cellular metabolism (phosphate and glucose metabolism) with other core functions including protein synthesis and degradation, calcium signaling and cell growth. The polypeptide is Calcium-binding and coiled-coil domain-containing protein 1 (CALCOCO1) (Pongo abelii (Sumatran orangutan)).